A 155-amino-acid chain; its full sequence is SsrA-binding protein (155 aa).

Belongs to the SmpB family.

The protein localises to the cytoplasm. In terms of biological role, required for rescue of stalled ribosomes mediated by trans-translation. Binds to transfer-messenger RNA (tmRNA), required for stable association of tmRNA with ribosomes. tmRNA and SmpB together mimic tRNA shape, replacing the anticodon stem-loop with SmpB. tmRNA is encoded by the ssrA gene; the 2 termini fold to resemble tRNA(Ala) and it encodes a 'tag peptide', a short internal open reading frame. During trans-translation Ala-aminoacylated tmRNA acts like a tRNA, entering the A-site of stalled ribosomes, displacing the stalled mRNA. The ribosome then switches to translate the ORF on the tmRNA; the nascent peptide is terminated with the 'tag peptide' encoded by the tmRNA and targeted for degradation. The ribosome is freed to recommence translation, which seems to be the essential function of trans-translation. This chain is SsrA-binding protein, found in Lactococcus lactis subsp. cremoris (strain MG1363).